The sequence spans 524 residues: Zinc finger protein 346 (524 aa).

Matrin-type zinc fingers lie at residues 34 to 64, 92 to 126, 162 to 192, 226 to 260, 286 to 316, 343 to 373, and 400 to 430; these read TQCKVCSAVLISESQKLAHYQSRKHANKVRR, DRSKCCPVCNMTFSSPVVAESHYIGKTHIKNLRLR, KFCKLCHSTFNNPLMAEQHYAGKKHKKQETK, GKGFSCDKCNIVLNSIEQYQAHVSGAKHKNQLMSM, FSCDTCNIVLNSIEQYQAHISGAKHKNHLKS, FSCDTCNIVLNSIEQYQAHISGAKHKNHLMS, and FSCDTCNIVLNSIEQYQAHVSGAKHKNQLMS. The Zn(2+) site is built by Cys36, Cys39, His52, His58, Cys97, Cys100, His113, and His119. Disordered stretches follow at residues 453–486 and 494–513; these read SAGGALSSGGPSGRGFCPSGDLTPKGPSSFGSLP and PLYPPAHSSQPYVHDDTMSP. Positions 476-486 are enriched in low complexity; sequence PKGPSSFGSLP.

It localises to the nucleus. The protein resides in the cytoplasm. Binds preferentially to dsRNA, but also to RNA-DNA hybrids. The polypeptide is Zinc finger protein 346 (Xenopus laevis (African clawed frog)).